We begin with the raw amino-acid sequence, 513 residues long: Histidine ammonia-lyase (513 aa).

The 5-imidazolinone (Ala-Gly) cross-link spans 144-146 (ASG). Ser145 carries the 2,3-didehydroalanine (Ser) modification.

The protein belongs to the PAL/histidase family. In terms of processing, contains an active site 4-methylidene-imidazol-5-one (MIO), which is formed autocatalytically by cyclization and dehydration of residues Ala-Ser-Gly.

The protein resides in the cytoplasm. The catalysed reaction is L-histidine = trans-urocanate + NH4(+). The protein operates within amino-acid degradation; L-histidine degradation into L-glutamate; N-formimidoyl-L-glutamate from L-histidine: step 1/3. The polypeptide is Histidine ammonia-lyase (Streptococcus pyogenes serotype M6 (strain ATCC BAA-946 / MGAS10394)).